Reading from the N-terminus, the 451-residue chain is Golgi reassembly-stacking protein 2 (451 aa).

Gly-2 carries the N-myristoyl glycine lipid modification. 2 PDZ GRASP-type domains span residues 15–105 (EGYH…FCSF) and 111–199 (NVWH…YGYL). Positions 15–215 (EGYHVLRVQE…PFEEGKKISL (201 aa)) are GRASP. Residues Arg-30 and Arg-47 each carry the dimethylated arginine modification. Positions 194-199 (IGYGYL) are important for membrane binding. The residue at position 214 (Ser-214) is a Phosphoserine. Thr-222 carries the post-translational modification Phosphothreonine. Position 225 is a phosphothreonine; by MAPK (Thr-225). Residues 236-252 (LSSVSPPSLSPPGTTGV) are compositionally biased toward low complexity. Disordered stretches follow at residues 236 to 255 (LSSV…VEQS) and 377 to 451 (EGSS…SEPS). A compositionally biased stretch (polar residues) spans 410–424 (SSLTVDVTSPASKVP). The residue at position 411 (Ser-411) is a Phosphoserine. Phosphothreonine is present on residues Thr-417 and Thr-435. A phosphoserine mark is found at Ser-443 and Ser-448.

It belongs to the GORASP family. Homodimer. Homooligomer. ER stress induces phosphorylation-dependent monomerization. Interacts with BLZF1/Golgin 45. Identified in a complex with RAB2 and GORASP2. Interacts with JAM2 and JAM3. Interacts with members of the p24 cargo receptors. Interacts with CNIH and the cytoplasmic domain of transmembrane TGFA, prior its transit in the trans-Golgi. Interacts with KCTD5. Interacts with TMED2 and TMED3. Interacts with SEC16A in response to ER stress. Interacts (via PDZ GRASP-type 1 domain) with core-glycosylated CFTR in response to ER stress. Myristoylated. Myristoylation is essential for the Golgi targeting. In terms of processing, palmitoylated. Post-translationally, phosphorylated in mitotic cells. ER stress-induced phosphorylation at Ser-443 induces monomerization and subsequent relocalization from Golgi to ER which is essential for mediating unconventional (ER/Golgi-independent) trafficking of CFTR to the cell membrane. Detected in lung, heart and testis. Colocalized in a polarized fashion in the acrosome region with JAM3 in round spermatids (at protein level).

Its subcellular location is the golgi apparatus membrane. The protein localises to the endoplasmic reticulum membrane. It is found in the golgi apparatus. Its function is as follows. Key structural protein of the Golgi apparatus. The membrane cisternae of the Golgi apparatus adhere to each other to form stacks, which are aligned side by side to form the Golgi ribbon. Acting in concert with GORASP1/GRASP65, is required for the formation and maintenance of the Golgi ribbon, and may be dispensable for the formation of stacks. However, other studies suggest that GORASP2 plays a role in assembly and membrane stacking of the Golgi cisternae, and in the process by which Golgi stacks reform after breakdown during mitosis and meiosis. May regulate the intracellular transport and presentation of a defined set of transmembrane proteins, such as transmembrane TGFA. Required for normal acrosome formation during spermiogenesis and normal male fertility, probably by promoting colocalization of JAM2 and JAM3 at contact sites between germ cells and Sertoli cells. Mediates ER stress-induced unconventional (ER/Golgi-independent) trafficking of core-glycosylated CFTR to cell membrane. In Mus musculus (Mouse), this protein is Golgi reassembly-stacking protein 2 (Gorasp2).